Here is a 238-residue protein sequence, read N- to C-terminus: Protein CPn_0658/CP_0089/CPj0658/CpB0684 (238 aa).

The protein belongs to the chlamydial CPn_0658/CT_538/TC_0825 family.

The sequence is that of Protein CPn_0658/CP_0089/CPj0658/CpB0684 from Chlamydia pneumoniae (Chlamydophila pneumoniae).